The chain runs to 70 residues: MADQNDVDYEHLEYVDYKDTEFLEQFINNQGKILPRRVTGVPARVQRQITKAIKRARHLALMPYVSESVR.

This sequence belongs to the bacterial ribosomal protein bS18 family. As to quaternary structure, part of the 30S ribosomal subunit. Forms a tight heterodimer with protein bS6.

Binds as a heterodimer with protein bS6 to the central domain of the 16S rRNA, where it helps stabilize the platform of the 30S subunit. The polypeptide is Small ribosomal subunit protein bS18 (Salinibacter ruber (strain DSM 13855 / M31)).